Here is a 178-residue protein sequence, read N- to C-terminus: ATP synthase subunit delta (178 aa).

The protein belongs to the ATPase delta chain family. F-type ATPases have 2 components, F(1) - the catalytic core - and F(0) - the membrane proton channel. F(1) has five subunits: alpha(3), beta(3), gamma(1), delta(1), epsilon(1). F(0) has three main subunits: a(1), b(2) and c(10-14). The alpha and beta chains form an alternating ring which encloses part of the gamma chain. F(1) is attached to F(0) by a central stalk formed by the gamma and epsilon chains, while a peripheral stalk is formed by the delta and b chains.

It localises to the cell membrane. In terms of biological role, f(1)F(0) ATP synthase produces ATP from ADP in the presence of a proton or sodium gradient. F-type ATPases consist of two structural domains, F(1) containing the extramembraneous catalytic core and F(0) containing the membrane proton channel, linked together by a central stalk and a peripheral stalk. During catalysis, ATP synthesis in the catalytic domain of F(1) is coupled via a rotary mechanism of the central stalk subunits to proton translocation. This protein is part of the stalk that links CF(0) to CF(1). It either transmits conformational changes from CF(0) to CF(1) or is implicated in proton conduction. The protein is ATP synthase subunit delta of Streptococcus gordonii (strain Challis / ATCC 35105 / BCRC 15272 / CH1 / DL1 / V288).